A 363-amino-acid chain; its full sequence is Pyrimidine monooxygenase RutA (363 aa).

FMN is bound by residues 49-50, Asn-115, Glu-124, 140-141, and Ser-190; these read IK and RY.

Belongs to the NtaA/SnaA/DszA monooxygenase family. RutA subfamily.

The enzyme catalyses uracil + FMNH2 + NADH + O2 = (Z)-3-ureidoacrylate + FMN + NAD(+) + H2O + H(+). It carries out the reaction thymine + FMNH2 + NADH + O2 = (Z)-2-methylureidoacrylate + FMN + NAD(+) + H2O + H(+). Catalyzes the pyrimidine ring opening between N-3 and C-4 by an unusual flavin hydroperoxide-catalyzed mechanism, adding oxygen atoms in the process to yield ureidoacrylate peracid, that immediately reacts with FMN forming ureidoacrylate and FMN-N(5)-oxide. The FMN-N(5)-oxide reacts spontaneously with NADH to produce FMN. Requires the flavin reductase RutF to regenerate FMN in vivo. This is Pyrimidine monooxygenase RutA from Escherichia coli O44:H18 (strain 042 / EAEC).